Here is a 361-residue protein sequence, read N- to C-terminus: 3-dehydroquinate synthase (361 aa).

NAD(+) contacts are provided by residues 105 to 109 (GVIGD), 129 to 130 (TT), Lys142, Lys151, and 169 to 172 (FLST). Zn(2+) contacts are provided by Glu184, His247, and His264.

The protein belongs to the sugar phosphate cyclases superfamily. Dehydroquinate synthase family. Co(2+) serves as cofactor. The cofactor is Zn(2+). NAD(+) is required as a cofactor.

The protein localises to the cytoplasm. The enzyme catalyses 7-phospho-2-dehydro-3-deoxy-D-arabino-heptonate = 3-dehydroquinate + phosphate. The protein operates within metabolic intermediate biosynthesis; chorismate biosynthesis; chorismate from D-erythrose 4-phosphate and phosphoenolpyruvate: step 2/7. In terms of biological role, catalyzes the conversion of 3-deoxy-D-arabino-heptulosonate 7-phosphate (DAHP) to dehydroquinate (DHQ). The chain is 3-dehydroquinate synthase from Endomicrobium trichonymphae.